The sequence spans 302 residues: Protoheme IX farnesyltransferase 2 (302 aa).

The next 9 helical transmembrane spans lie at 14–34 (IIFGNLISAAGGFLLAAQGSV), 36–56 (WWLLAATVVGLSLVVASGCAI), 85–105 (AALAHGVVLGLAGFALLWFCT), 108–128 (LATGCVLFGFVIYVGVYSLYM), 133–153 (VYGTLVGSLSGAVPPVAGYCA), 163–183 (AILLLMFSLWQMPHSYAIAIF), 209–229 (IVLYILAFAAATVMLVFGGYA), 230–250 (GYGYLAVAVATSLWWLKMALS), and 264–284 (QVFFFSIITITSLSVMMAVDG).

The protein belongs to the UbiA prenyltransferase family. Protoheme IX farnesyltransferase subfamily.

It localises to the cell inner membrane. The enzyme catalyses heme b + (2E,6E)-farnesyl diphosphate + H2O = Fe(II)-heme o + diphosphate. It functions in the pathway porphyrin-containing compound metabolism; heme O biosynthesis; heme O from protoheme: step 1/1. Its function is as follows. Converts heme B (protoheme IX) to heme O by substitution of the vinyl group on carbon 2 of heme B porphyrin ring with a hydroxyethyl farnesyl side group. This is Protoheme IX farnesyltransferase 2 from Chromobacterium violaceum (strain ATCC 12472 / DSM 30191 / JCM 1249 / CCUG 213 / NBRC 12614 / NCIMB 9131 / NCTC 9757 / MK).